Reading from the N-terminus, the 638-residue chain is 1-deoxy-D-xylulose-5-phosphate synthase (638 aa).

Residues histidine 76 and 117–119 contribute to the thiamine diphosphate site; that span reads AHS. Aspartate 148 provides a ligand contact to Mg(2+). Residues 149–150, asparagine 177, tyrosine 287, and glutamate 369 contribute to the thiamine diphosphate site; that span reads GS. Asparagine 177 contacts Mg(2+).

Belongs to the transketolase family. DXPS subfamily. As to quaternary structure, homodimer. Mg(2+) is required as a cofactor. It depends on thiamine diphosphate as a cofactor.

It catalyses the reaction D-glyceraldehyde 3-phosphate + pyruvate + H(+) = 1-deoxy-D-xylulose 5-phosphate + CO2. The protein operates within metabolic intermediate biosynthesis; 1-deoxy-D-xylulose 5-phosphate biosynthesis; 1-deoxy-D-xylulose 5-phosphate from D-glyceraldehyde 3-phosphate and pyruvate: step 1/1. In terms of biological role, catalyzes the acyloin condensation reaction between C atoms 2 and 3 of pyruvate and glyceraldehyde 3-phosphate to yield 1-deoxy-D-xylulose-5-phosphate (DXP). The polypeptide is 1-deoxy-D-xylulose-5-phosphate synthase (Rhodopseudomonas palustris (strain HaA2)).